A 364-amino-acid chain; its full sequence is Aminomethyltransferase (364 aa).

It belongs to the GcvT family. As to quaternary structure, the glycine cleavage system is composed of four proteins: P, T, L and H.

It catalyses the reaction N(6)-[(R)-S(8)-aminomethyldihydrolipoyl]-L-lysyl-[protein] + (6S)-5,6,7,8-tetrahydrofolate = N(6)-[(R)-dihydrolipoyl]-L-lysyl-[protein] + (6R)-5,10-methylene-5,6,7,8-tetrahydrofolate + NH4(+). Its function is as follows. The glycine cleavage system catalyzes the degradation of glycine. This is Aminomethyltransferase from Escherichia coli O6:H1 (strain CFT073 / ATCC 700928 / UPEC).